We begin with the raw amino-acid sequence, 217 residues long: 3-isopropylmalate dehydratase small subunit (217 aa).

The protein belongs to the LeuD family. LeuD type 1 subfamily. As to quaternary structure, heterodimer of LeuC and LeuD.

The enzyme catalyses (2R,3S)-3-isopropylmalate = (2S)-2-isopropylmalate. It functions in the pathway amino-acid biosynthesis; L-leucine biosynthesis; L-leucine from 3-methyl-2-oxobutanoate: step 2/4. Catalyzes the isomerization between 2-isopropylmalate and 3-isopropylmalate, via the formation of 2-isopropylmaleate. This is 3-isopropylmalate dehydratase small subunit from Delftia acidovorans (strain DSM 14801 / SPH-1).